We begin with the raw amino-acid sequence, 207 residues long: Small ribosomal subunit protein uS10m (207 aa).

Residues 1 to 14 (MNMFRQAVRSFVRY) constitute a mitochondrion transit peptide.

Belongs to the universal ribosomal protein uS10 family. In terms of assembly, part of the mitochondrial small ribosomal subunit.

It is found in the mitochondrion. Its function is as follows. Involved in mitochondrial genome encoded proteins translation. Involved in the binding of tRNA to the ribosomes. The chain is Small ribosomal subunit protein uS10m (RSM10) from Kluyveromyces lactis (strain ATCC 8585 / CBS 2359 / DSM 70799 / NBRC 1267 / NRRL Y-1140 / WM37) (Yeast).